The following is a 98-amino-acid chain: NADH-ubiquinone oxidoreductase chain 4L (98 aa).

Helical transmembrane passes span 1–21 (MSLVHINILMAFIMSLTGLLM), 29–49 (ALLCLEGMMLSLFVLATLTIL), and 61–81 (IILLVFAACEAAIGLALLVMI).

The protein belongs to the complex I subunit 4L family. Core subunit of respiratory chain NADH dehydrogenase (Complex I) which is composed of 45 different subunits.

The protein resides in the mitochondrion inner membrane. The catalysed reaction is a ubiquinone + NADH + 5 H(+)(in) = a ubiquinol + NAD(+) + 4 H(+)(out). Its function is as follows. Core subunit of the mitochondrial membrane respiratory chain NADH dehydrogenase (Complex I) which catalyzes electron transfer from NADH through the respiratory chain, using ubiquinone as an electron acceptor. Part of the enzyme membrane arm which is embedded in the lipid bilayer and involved in proton translocation. This Delphinapterus leucas (Beluga whale) protein is NADH-ubiquinone oxidoreductase chain 4L (MT-ND4L).